Reading from the N-terminus, the 694-residue chain is Two-component response regulator ORR25 (694 aa).

The Response regulatory domain occupies 17-132 (RVLAVDDSPV…DIQNIWQHVW (116 aa)). Residue Asp68 is modified to 4-aspartylphosphate. An HTH myb-type domain is found at 183–242 (TLKRQRVVWTPELHRDFVIAVHELGVDRAVPRKILRMMKVDYMTRENIASHLQKYRLYLK). The H-T-H motif DNA-binding region spans 213–238 (PRKILRMMKVDYMTRENIASHLQKYR). The tract at residues 326-349 (VGHGGSPGNNPVFQPLQNSSNARK) is disordered. Residues 333–347 (GNNPVFQPLQNSSNA) show a composition bias toward polar residues.

It belongs to the ARR family. Type-B subfamily. Two-component system major event consists of a His-to-Asp phosphorelay between a sensor histidine kinase (HK) and a response regulator (RR). In plants, the His-to-Asp phosphorelay involves an additional intermediate named Histidine-containing phosphotransfer protein (HPt). This multistep phosphorelay consists of a His-Asp-His-Asp sequential transfer of a phosphate group between first a His and an Asp of the HK protein, followed by the transfer to a conserved His of the HPt protein and finally the transfer to an Asp in the receiver domain of the RR protein.

The protein resides in the nucleus. Functionally, transcriptional activator that binds specific DNA sequence. Functions as a response regulator involved in His-to-Asp phosphorelay signal transduction system. Phosphorylation of the Asp residue in the receiver domain activates the ability of the protein to promote the transcription of target genes. May directly activate some type-A response regulators in response to cytokinins. In Oryza sativa subsp. japonica (Rice), this protein is Two-component response regulator ORR25.